Reading from the N-terminus, the 634-residue chain is RNA polymerase sigma factor RpoD (634 aa).

Positions 177 to 202 are disordered; it reads LHDETPENDEENSSETEGEEHEDNHL. The span at 182 to 197 shows a compositional bias: acidic residues; the sequence is PENDEENSSETEGEEH. The interval 385–455 is sigma-70 factor domain-2; sequence MIEANLRLVI…TRAIADQART (71 aa). Positions 409–412 match the Interaction with polymerase core subunit RpoC motif; that stretch reads DLIQ. The segment at 464 to 541 is sigma-70 factor domain-3; that stretch reads ETINKILRTS…DKNAVAPIDA (78 aa). The segment at 554 to 607 is sigma-70 factor domain-4; the sequence is VLATLTPREERVLRMRFGIGMNTDHTLEEVGQQFKVTRERIRQIESKALRKLQH. The H-T-H motif DNA-binding region spans 580–599; the sequence is LEEVGQQFKVTRERIRQIES. The tract at residues 608–634 is disordered; that stretch reads PIRSKKLNSFRSGGKRGDGNSSDLLEA.

It belongs to the sigma-70 factor family. RpoD/SigA subfamily. Interacts transiently with the RNA polymerase catalytic core.

Its subcellular location is the cytoplasm. Functionally, sigma factors are initiation factors that promote the attachment of RNA polymerase to specific initiation sites and are then released. This sigma factor is the primary sigma factor during exponential growth. This is RNA polymerase sigma factor RpoD from Rickettsia conorii (strain ATCC VR-613 / Malish 7).